Here is a 100-residue protein sequence, read N- to C-terminus: NADH-quinone oxidoreductase subunit K (100 aa).

The next 3 membrane-spanning stretches (helical) occupy residues 4–24 (LQHGLILAAILFVLGLTGLLI), 28–48 (LLFMLISLEIMINAAALAFVV), and 60–80 (VMYILAITLAAAEASIGLALL).

Belongs to the complex I subunit 4L family. In terms of assembly, NDH-1 is composed of 13 different subunits. Subunits NuoA, H, J, K, L, M, N constitute the membrane sector of the complex.

It localises to the cell inner membrane. It catalyses the reaction a quinone + NADH + 5 H(+)(in) = a quinol + NAD(+) + 4 H(+)(out). Its function is as follows. NDH-1 shuttles electrons from NADH, via FMN and iron-sulfur (Fe-S) centers, to quinones in the respiratory chain. The immediate electron acceptor for the enzyme in this species is believed to be ubiquinone. Couples the redox reaction to proton translocation (for every two electrons transferred, four hydrogen ions are translocated across the cytoplasmic membrane), and thus conserves the redox energy in a proton gradient. In Pectobacterium carotovorum subsp. carotovorum (strain PC1), this protein is NADH-quinone oxidoreductase subunit K.